The sequence spans 849 residues: Villin-1 (849 aa).

5 Gelsolin-like repeats span residues I30–L107, R147–K213, V262–F335, Q405–F475, and A527–L566. The interval E739–R849 is disordered. 2 stretches are compositionally biased toward low complexity: residues K747–T782 and P791–S823.

It belongs to the villin/gelsolin family. As to expression, expressed in roots, young leaves, and inflorescences, mostly in the vasculature of roots, leaves, and filaments of the anthers. Also detected in guard cells.

The protein resides in the cytoplasm. It is found in the cytoskeleton. Ca(2+)-independent actin-binding protein. Binds actin microfilaments (MFs). Involved in actin filament bundling, severing and capping. Caps the barbed end of actin filaments and protects them from disassembly. Promotes VLN3-mediated MF severing. This is Villin-1 from Oryza sativa subsp. japonica (Rice).